The chain runs to 143 residues: Transcriptional regulator MraZ (143 aa).

SpoVT-AbrB domains are found at residues 5 to 47 and 76 to 119; these read EYTH…PLIE and ACEC…DAER.

Belongs to the MraZ family. In terms of assembly, forms oligomers.

Its subcellular location is the cytoplasm. The protein resides in the nucleoid. This is Transcriptional regulator MraZ from Limosilactobacillus fermentum (strain NBRC 3956 / LMG 18251) (Lactobacillus fermentum).